The following is a 100-amino-acid chain: ATP-dependent Clp protease adapter protein ClpS (100 aa).

The protein belongs to the ClpS family. Binds to the N-terminal domain of the chaperone ClpA.

Functionally, involved in the modulation of the specificity of the ClpAP-mediated ATP-dependent protein degradation. This Neisseria meningitidis serogroup B (strain ATCC BAA-335 / MC58) protein is ATP-dependent Clp protease adapter protein ClpS.